Consider the following 346-residue polypeptide: Phosphate acyltransferase (346 aa).

This sequence belongs to the PlsX family. Homodimer. Probably interacts with PlsY.

Its subcellular location is the cytoplasm. The enzyme catalyses a fatty acyl-[ACP] + phosphate = an acyl phosphate + holo-[ACP]. Its pathway is lipid metabolism; phospholipid metabolism. In terms of biological role, catalyzes the reversible formation of acyl-phosphate (acyl-PO(4)) from acyl-[acyl-carrier-protein] (acyl-ACP). This enzyme utilizes acyl-ACP as fatty acyl donor, but not acyl-CoA. The chain is Phosphate acyltransferase from Geotalea daltonii (strain DSM 22248 / JCM 15807 / FRC-32) (Geobacter daltonii).